The chain runs to 82 residues: Quinohemoprotein amine dehydrogenase subunit gamma (82 aa).

A cross-link (4-cysteinyl-glutamic acid (Cys-Glu)) is located at residues 7–16 (CTTSFDPGWE). 2 consecutive cross-links (3-cysteinyl-aspartic acid (Cys-Asp)) follow at residues 27 to 33 (CQPMEAD) and 41 to 49 (CWWPAQVAD). The active-site Proton acceptor is Asp33. The 4'-cysteinyl-tryptophylquinone (Cys-Trp) cross-link spans 37–43 (CADPCWW). Position 43 is a tryptophylquinone (Trp43).

This sequence belongs to the quinohemoprotein amine dehydrogenase subunit gamma family. As to quaternary structure, heterotrimer of an alpha, a beta and a gamma subunit. The cofactor is cysteine tryptophylquinone residue. In terms of processing, the cysteine tryptophylquinone (CTQ) is generated by oxidation of the indole ring of a tryptophan residue to form tryptophylquinone, followed by covalent cross-linking with a cysteine residue.

The protein localises to the periplasm. The enzyme catalyses 2 Fe(III)-[cytochrome c550] + an aliphatic amine + H2O = 2 Fe(II)-[cytochrome c550] + an aldehyde + NH4(+) + 2 H(+). With respect to regulation, inhibited by carbonyl reagents such as hydrazine, hydroxylamine, phenylhydrazine and semicarbazide. In terms of biological role, catalyzes the oxidative deamination of a wide range of primary aliphatic and aromatic amines. The physiological electron acceptor is the constitutive cytochrome c550. The chain is Quinohemoprotein amine dehydrogenase subunit gamma (qhnDH) from Paracoccus denitrificans.